Reading from the N-terminus, the 411-residue chain is tRNA pseudouridine synthase Pus10 (411 aa).

Residues 65-192 (ALAKCHLPTR…SGQVKVVRNP (128 aa)) enclose the THUMP domain. D244 (nucleophile) is an active-site residue. Substrate-binding residues include Y305 and Y376.

It belongs to the pseudouridine synthase Pus10 family.

The catalysed reaction is uridine(54) in tRNA = pseudouridine(54) in tRNA. The enzyme catalyses uridine(55) in tRNA = pseudouridine(55) in tRNA. Its function is as follows. Responsible for synthesis of pseudouridine from uracil-54 and uracil-55 in the psi GC loop of transfer RNAs. In Pyrobaculum arsenaticum (strain DSM 13514 / JCM 11321 / PZ6), this protein is tRNA pseudouridine synthase Pus10.